Consider the following 325-residue polypeptide: Undecaprenyl-phosphate 4-deoxy-4-formamido-L-arabinose transferase (325 aa).

A run of 2 helical transmembrane segments spans residues 236-256 and 270-290; these read LSIF…LLIL and VFTL…GMGL.

The protein belongs to the glycosyltransferase 2 family.

It localises to the cell inner membrane. It carries out the reaction UDP-4-deoxy-4-formamido-beta-L-arabinose + di-trans,octa-cis-undecaprenyl phosphate = 4-deoxy-4-formamido-alpha-L-arabinopyranosyl di-trans,octa-cis-undecaprenyl phosphate + UDP. Its pathway is glycolipid biosynthesis; 4-amino-4-deoxy-alpha-L-arabinose undecaprenyl phosphate biosynthesis; 4-amino-4-deoxy-alpha-L-arabinose undecaprenyl phosphate from UDP-4-deoxy-4-formamido-beta-L-arabinose and undecaprenyl phosphate: step 1/2. It participates in bacterial outer membrane biogenesis; lipopolysaccharide biosynthesis. In terms of biological role, catalyzes the transfer of 4-deoxy-4-formamido-L-arabinose from UDP to undecaprenyl phosphate. The modified arabinose is attached to lipid A and is required for resistance to polymyxin and cationic antimicrobial peptides. In Edwardsiella ictaluri (strain 93-146), this protein is Undecaprenyl-phosphate 4-deoxy-4-formamido-L-arabinose transferase.